Here is a 328-residue protein sequence, read N- to C-terminus: Malate dehydrogenase (328 aa).

12-18 (GAAGQIA) is an NAD(+) binding site. Substrate-binding residues include R93 and R99. NAD(+) is bound by residues N106, Q113, and 130–132 (VGN). Residues N132 and R163 each coordinate substrate. Catalysis depends on H188, which acts as the Proton acceptor.

Belongs to the LDH/MDH superfamily. MDH type 2 family.

It catalyses the reaction (S)-malate + NAD(+) = oxaloacetate + NADH + H(+). Functionally, catalyzes the reversible oxidation of malate to oxaloacetate. In Burkholderia multivorans (strain ATCC 17616 / 249), this protein is Malate dehydrogenase.